A 126-amino-acid chain; its full sequence is LFVGLTSAKYHDVCQLPRDPGPCRAYIPLYYFNSRTCLCEKFVYGGCQGNANRFDTVEDCRRRCGGGDLCSLPRDSGPCEAAIPRWWYNKRTNRCQRFTYGGCEGNANNFKTLDECRFQCRKRSTY.

BPTI/Kunitz inhibitor domains lie at 14–64 and 70–120; these read CQLP…RRRC and CSLP…RFQC. Cystine bridges form between C14-C64, C23-C47, C39-C60, C70-C120, C79-C103, and C95-C116.

Component of the acid-soluble and acid-insoluble organic matrix of calcified shell layers (at protein level).

It localises to the secreted. Serine protease inhibitor. The sequence is that of BPTI/Kunitz domain-containing protein from Haliotis asinina (Donkey's ear abalone).